The following is a 549-amino-acid chain: Glucose-6-phosphate isomerase (549 aa).

E355 functions as the Proton donor in the catalytic mechanism. Catalysis depends on residues H387 and K515.

Belongs to the GPI family.

Its subcellular location is the cytoplasm. It carries out the reaction alpha-D-glucose 6-phosphate = beta-D-fructose 6-phosphate. Its pathway is carbohydrate biosynthesis; gluconeogenesis. It functions in the pathway carbohydrate degradation; glycolysis; D-glyceraldehyde 3-phosphate and glycerone phosphate from D-glucose: step 2/4. Functionally, catalyzes the reversible isomerization of glucose-6-phosphate to fructose-6-phosphate. This Pasteurella multocida (strain Pm70) protein is Glucose-6-phosphate isomerase.